A 242-amino-acid polypeptide reads, in one-letter code: Ribonuclease HII (242 aa).

Residues 21–234 (KIIVGLDEAG…SKNLLKEIEE (214 aa)) form the RNase H type-2 domain. The a divalent metal cation site is built by aspartate 27, glutamate 28, and aspartate 128.

Belongs to the RNase HII family. Mn(2+) is required as a cofactor. Requires Mg(2+) as cofactor.

The protein localises to the cytoplasm. It catalyses the reaction Endonucleolytic cleavage to 5'-phosphomonoester.. Functionally, endonuclease that specifically degrades the RNA of RNA-DNA hybrids. This Methanococcus maripaludis (strain DSM 14266 / JCM 13030 / NBRC 101832 / S2 / LL) protein is Ribonuclease HII.